The following is a 429-amino-acid chain: MDNDGTIVDVTTHQLPWHTASHQRQRAFAQSAKLQDVLYEIRGPVHQHAARLEAEGHRILKLNIGNPAPFGFEAPDVIMRDIIQALPYAQGYSDSQGILSARRAVVTRYELVPGFPRFDVDDVYLGNGVSELITMTLQALLDNGDQVLIPSPDYPLWTASTSLAGGTPVHYLCDETQGWQPDIADLESKITERTKALVVINPNNPTGAVYSCEILTQMVDLARKHQLLLLADEIYDKILYDDAKHISLASIAPDMLCLTFNGLSKAYRVAGYRAGWLAITGPKEHASSFIEGIGLLANMRLCPNVPAQHAIQVALGGHQSIEDLVLPGGRLLEQRDIAWTKLNEIPGVSCVKPAGALYAFPRLDPEVYDIDDDEQLVLDLLLSEKILVTQGTGFNWPAPDHLRLVTLPWSRDLAAAIERLGNFLVSYRQ.

The L-alanine site is built by Gly-65 and Asn-204. Residue Lys-265 is modified to N6-(pyridoxal phosphate)lysine. Arg-403 contacts L-alanine.

The protein belongs to the class-I pyridoxal-phosphate-dependent aminotransferase family. As to quaternary structure, homodimer. It depends on pyridoxal 5'-phosphate as a cofactor.

Its subcellular location is the cytoplasm. The catalysed reaction is L-alanine + 2-oxoglutarate = pyruvate + L-glutamate. The polypeptide is Alanine aminotransferase (aspC) (Mycobacterium bovis (strain ATCC BAA-935 / AF2122/97)).